A 98-amino-acid chain; its full sequence is NADH-ubiquinone oxidoreductase chain 4L (98 aa).

3 helical membrane passes run 1–21, 29–49, and 61–81; these read MIPT…GMLI, SLLC…LIAL, and IILL…LVSI.

This sequence belongs to the complex I subunit 4L family. Core subunit of respiratory chain NADH dehydrogenase (Complex I) which is composed of 45 different subunits.

It localises to the mitochondrion inner membrane. The enzyme catalyses a ubiquinone + NADH + 5 H(+)(in) = a ubiquinol + NAD(+) + 4 H(+)(out). Its function is as follows. Core subunit of the mitochondrial membrane respiratory chain NADH dehydrogenase (Complex I) which catalyzes electron transfer from NADH through the respiratory chain, using ubiquinone as an electron acceptor. Part of the enzyme membrane arm which is embedded in the lipid bilayer and involved in proton translocation. This chain is NADH-ubiquinone oxidoreductase chain 4L (MT-ND4L), found in Macaca ochreata (Booted macaque).